A 462-amino-acid polypeptide reads, in one-letter code: F-box/LRR-repeat protein At5g38396 (462 aa).

One can recognise an F-box domain in the interval 1–47; the sequence is MDLLRNIPDELICHILSFLTTKEAALTSVLSKRWRNLLAFVSNLHID. LRR repeat units follow at residues 118-146, 148-175, 197-222, 302-333, and 334-359; these read SIDLCMDEYFLLSSKRFESKNLVRLKLHR, CIGQREKTVGWLAGEIFLPMLKTLELDY, VDAFWFTTFTDVTVSNPSLKTLTMSS, CLDLSANTLEMLSLSCESMPVFKNLKSLSIKS, and AENRGWQAMPVLLRNCPHLETLVLEG.

This is F-box/LRR-repeat protein At5g38396 from Arabidopsis thaliana (Mouse-ear cress).